The primary structure comprises 463 residues: Glutamate--tRNA ligase 1 (463 aa).

The 'HIGH' region signature appears at 10–20 (PSPTGYLHIGG). The 'KMSKS' region motif lies at 238 to 242 (KLSKR). Lys241 serves as a coordination point for ATP.

This sequence belongs to the class-I aminoacyl-tRNA synthetase family. Glutamate--tRNA ligase type 1 subfamily. As to quaternary structure, monomer.

Its subcellular location is the cytoplasm. The enzyme catalyses tRNA(Glu) + L-glutamate + ATP = L-glutamyl-tRNA(Glu) + AMP + diphosphate. In terms of biological role, catalyzes the attachment of glutamate to tRNA(Glu) in a two-step reaction: glutamate is first activated by ATP to form Glu-AMP and then transferred to the acceptor end of tRNA(Glu). This is Glutamate--tRNA ligase 1 from Helicobacter pylori (strain G27).